We begin with the raw amino-acid sequence, 816 residues long: Fibroblast growth factor receptor (816 aa).

A signal peptide spans 1 to 19 (MISDWCVVLVLLMSRLVFG). Topologically, residues 20–370 (LNFTEPVNYI…YKEESVEKTV (351 aa)) are extracellular. 9 N-linked (GlcNAc...) asparagine glycosylation sites follow: asparagine 21, asparagine 69, asparagine 119, asparagine 156, asparagine 171, asparagine 244, asparagine 274, asparagine 313, and asparagine 321. The Ig-like C2-type 1 domain maps to 25-105 (PVNYILKLGE…VTAMNEESVQ (81 aa)). Cysteines 43 and 94 form a disulfide. Residues 126-217 (LRIKNDISLL…GKIEHIMTVE (92 aa)) form the Ig-like C2-type 2 domain. Cysteine 147 and cysteine 201 form a disulfide bridge. The chain crosses the membrane as a helical span at residues 371 to 391 (IFIVITSMLAGLIFVAFVIFF). Topologically, residues 392 to 816 (ICRVRSKDKF…DILLSHYAVS (425 aa)) are cytoplasmic. The Protein kinase domain maps to 474-747 (LETDCLLGEG…QLIEDLERML (274 aa)). ATP-binding positions include 480–488 (LGEGAFGRV) and lysine 508. Aspartate 612 acts as the Proton acceptor in catalysis. Tyrosine 643 is modified (phosphotyrosine; by autocatalysis).

Belongs to the protein kinase superfamily. Tyr protein kinase family. Fibroblast growth factor receptor subfamily.

The protein localises to the membrane. The enzyme catalyses L-tyrosyl-[protein] + ATP = O-phospho-L-tyrosyl-[protein] + ADP + H(+). Functionally, receptor for basic fibroblast growth factor. This chain is Fibroblast growth factor receptor (FGFR), found in Hydra vulgaris (Hydra).